Consider the following 436-residue polypeptide: 3-ketoacyl-CoA thiolase (436 aa).

Residue C99 is the Acyl-thioester intermediate of the active site. Catalysis depends on proton acceptor residues H392 and C422.

This sequence belongs to the thiolase-like superfamily. Thiolase family. In terms of assembly, heterotetramer of two alpha chains (FadJ) and two beta chains (FadI).

Its subcellular location is the cytoplasm. The catalysed reaction is an acyl-CoA + acetyl-CoA = a 3-oxoacyl-CoA + CoA. The protein operates within lipid metabolism; fatty acid beta-oxidation. Its function is as follows. Catalyzes the final step of fatty acid oxidation in which acetyl-CoA is released and the CoA ester of a fatty acid two carbons shorter is formed. The protein is 3-ketoacyl-CoA thiolase of Salmonella paratyphi C (strain RKS4594).